A 131-amino-acid chain; its full sequence is Small ribosomal subunit protein uS8 (131 aa).

This sequence belongs to the universal ribosomal protein uS8 family. As to quaternary structure, part of the 30S ribosomal subunit. Contacts proteins S5 and S12.

Functionally, one of the primary rRNA binding proteins, it binds directly to 16S rRNA central domain where it helps coordinate assembly of the platform of the 30S subunit. This chain is Small ribosomal subunit protein uS8, found in Nitrosomonas europaea (strain ATCC 19718 / CIP 103999 / KCTC 2705 / NBRC 14298).